A 156-amino-acid chain; its full sequence is Calcium-binding protein A (156 aa).

EF-hand domains lie at 4-39 (AITK…TGSK), 40-75 (DPLR…VAAK), 80-115 (AINN…NNPD), and 118-153 (APLM…YKSL). Asp-17, Asn-19, Asp-21, Asn-23, Glu-28, Asp-53, Asp-55, Asp-57, Glu-64, Asp-93, Asp-95, Asp-97, Arg-99, Glu-104, Asp-131, Asp-133, Asp-135, and Glu-142 together coordinate Ca(2+).

The sequence is that of Calcium-binding protein A (cbpA) from Dictyostelium discoideum (Social amoeba).